Here is a 292-residue protein sequence, read N- to C-terminus: 4-hydroxy-tetrahydrodipicolinate synthase (292 aa).

Thr-45 is a pyruvate binding site. The active-site Proton donor/acceptor is Tyr-133. Lys-161 (schiff-base intermediate with substrate) is an active-site residue. Ile-203 is a pyruvate binding site.

The protein belongs to the DapA family. As to quaternary structure, homotetramer; dimer of dimers.

The protein localises to the cytoplasm. It carries out the reaction L-aspartate 4-semialdehyde + pyruvate = (2S,4S)-4-hydroxy-2,3,4,5-tetrahydrodipicolinate + H2O + H(+). It functions in the pathway amino-acid biosynthesis; L-lysine biosynthesis via DAP pathway; (S)-tetrahydrodipicolinate from L-aspartate: step 3/4. Catalyzes the condensation of (S)-aspartate-beta-semialdehyde [(S)-ASA] and pyruvate to 4-hydroxy-tetrahydrodipicolinate (HTPA). The sequence is that of 4-hydroxy-tetrahydrodipicolinate synthase from Dechloromonas aromatica (strain RCB).